We begin with the raw amino-acid sequence, 588 residues long: Mitochondrial tRNA methylthiotransferase CDK5RAP1 (588 aa).

A mitochondrion-targeting transit peptide spans methionine 1–alanine 30. 2 disordered regions span residues serine 33–phenylalanine 53 and alanine 70–glycine 91. The MTTase N-terminal domain occupies arginine 99 to serine 219. [4Fe-4S] cluster-binding residues include cysteine 108, cysteine 144, cysteine 182, cysteine 257, cysteine 261, and cysteine 264. The Radical SAM core domain maps to serine 243 to alanine 498. In terms of domain architecture, TRAM spans lysine 500–cysteine 575.

The protein belongs to the methylthiotransferase family. MiaB subfamily. Interacts with CDK5R1 (p35 form). CDK5RAP1, CDK5RAP2 and CDK5RAP3 show competitive binding to CDK5R1. Probably forms a complex with CDK5R1 and CDK5. [4Fe-4S] cluster is required as a cofactor. In terms of tissue distribution, expressed in brain, liver, skeletal muscle and heart.

Its subcellular location is the mitochondrion. It catalyses the reaction N(6)-dimethylallyladenosine(37) in tRNA + (sulfur carrier)-SH + AH2 + 2 S-adenosyl-L-methionine = 2-methylsulfanyl-N(6)-dimethylallyladenosine(37) in tRNA + (sulfur carrier)-H + 5'-deoxyadenosine + L-methionine + A + S-adenosyl-L-homocysteine + 2 H(+). Its function is as follows. Methylthiotransferase that catalyzes the conversion of N6-(dimethylallyl)adenosine (i(6)A) to 2-methylthio-N6-(dimethylallyl)adenosine (ms(2)i(6)A) at position 37 (adjacent to the 3'-end of the anticodon) of four mitochondrial DNA-encoded tRNAs (Ser(UCN), Phe, Tyr and Trp). Essential for efficient and highly accurate protein translation by the ribosome. Specifically inhibits CDK5 activation by CDK5R1. Essential for efficient mitochondrial protein synthesis and respiratory chain. This is Mitochondrial tRNA methylthiotransferase CDK5RAP1 from Mus musculus (Mouse).